Reading from the N-terminus, the 119-residue chain is Holo-[acyl-carrier-protein] synthase (119 aa).

Residues Asp8 and Glu50 each contribute to the Mg(2+) site.

This sequence belongs to the P-Pant transferase superfamily. AcpS family. Mg(2+) serves as cofactor.

Its subcellular location is the cytoplasm. The catalysed reaction is apo-[ACP] + CoA = holo-[ACP] + adenosine 3',5'-bisphosphate + H(+). Its function is as follows. Transfers the 4'-phosphopantetheine moiety from coenzyme A to a Ser of acyl-carrier-protein. This chain is Holo-[acyl-carrier-protein] synthase, found in Clavibacter michiganensis subsp. michiganensis (strain NCPPB 382).